The sequence spans 174 residues: Beta-lactoglobulin (174 aa).

A signal peptide spans 1–18 (MKFLLLTVGLTSICAIQA). 2 disulfide bridges follow: cysteine 79–cysteine 172 and cysteine 122–cysteine 134.

It belongs to the calycin superfamily. Lipocalin family. As to quaternary structure, monomer.

The protein resides in the secreted. In terms of biological role, lactoglobulin is the primary component of whey, it binds retinol and is probably involved in the transport of that molecule. The chain is Beta-lactoglobulin (LGB) from Trichosurus vulpecula (Brush-tailed possum).